We begin with the raw amino-acid sequence, 286 residues long: MSIVGRNAILNLRISLCPLFMGKRSFVSSPVSNSAKAVKFLKAQRRKQKNEAKQATLKASTDKVDPVLGRADTPFITRIMAELKEPLVLSKGYNIEEVDKFLAAIESAKRERAELSGLNTEVVGIEDIEKLEDRREAILRILSMRNSENKNAIKMAVELARKEFERFPGDTGSSEVQAACMTVRIQNMANHIKEHRKDFANTRNLRILVQQRQAILRYLKRDNPEKYYWTIQKLGLNDAAITDEFNMDRRYMQDYEFFGDKILIRDSKKVANQKRKEIRKQKRATF.

Residues 1–33 constitute a mitochondrion transit peptide; it reads MSIVGRNAILNLRISLCPLFMGKRSFVSSPVSN.

This sequence belongs to the universal ribosomal protein uS15 family. In terms of assembly, component of the mitochondrial small ribosomal subunit (mt-SSU). Mature yeast 74S mitochondrial ribosomes consist of a small (37S) and a large (54S) subunit. The 37S small subunit contains a 15S ribosomal RNA (15S mt-rRNA) and 34 different proteins. The 54S large subunit contains a 21S rRNA (21S mt-rRNA) and 46 different proteins. Post-translationally, the precursor is processed in two steps involving mitochondrial intermediate peptidase (MIP) and mitochondrial processing peptidase (MPP).

The protein resides in the mitochondrion. In terms of biological role, component of the mitochondrial ribosome (mitoribosome), a dedicated translation machinery responsible for the synthesis of mitochondrial genome-encoded proteins, including at least some of the essential transmembrane subunits of the mitochondrial respiratory chain. The mitoribosomes are attached to the mitochondrial inner membrane and translation products are cotranslationally integrated into the membrane. This Saccharomyces cerevisiae (strain ATCC 204508 / S288c) (Baker's yeast) protein is Small ribosomal subunit protein uS15m (MRPS28).